Here is a 240-residue protein sequence, read N- to C-terminus: MSNQPFKFKQFSIDQDRCAMKIGTDGVLLGAWASLEHFPDSILDIGTGTGLIALMLAQRSDAELIDALEIEENAYEQSVENFENSDWGDRLFCYHAAFDEFVEEMQDEEKYDLIISNPPFYSENYKTGDEYRDQARFADALPLTELIQGASHLLSENGHLDLIIPFSEERKALEITSSHNLFPNKITRVKGTANSPIKRSLISFNFQKSETVIDELTLEISRHHYTEEFKELVQDFYLKL.

Belongs to the methyltransferase superfamily. tRNA (adenine-N(6)-)-methyltransferase family.

Its subcellular location is the cytoplasm. It catalyses the reaction adenosine(37) in tRNA1(Val) + S-adenosyl-L-methionine = N(6)-methyladenosine(37) in tRNA1(Val) + S-adenosyl-L-homocysteine + H(+). In terms of biological role, specifically methylates the adenine in position 37 of tRNA(1)(Val) (anticodon cmo5UAC). The sequence is that of tRNA1(Val) (adenine(37)-N6)-methyltransferase from Christiangramia forsetii (strain DSM 17595 / CGMCC 1.15422 / KT0803) (Gramella forsetii).